A 70-amino-acid chain; its full sequence is MSRKMTGIVKTFDGKSGKGLITPSDGRIDVQLHVSALNLRDAEEITTGLRVEFCRINGLRGPSAANVYLS.

One can recognise a CSD domain in the interval 7-67 (GIVKTFDGKS…GLRGPSAANV (61 aa)).

It is found in the cytoplasm. In Escherichia coli (strain K12), this protein is Cold shock-like protein CspF (cspF).